The chain runs to 444 residues: ATP-dependent protease ATPase subunit HslU (444 aa).

ATP-binding positions include I18 and 60–65; that span reads GVGKTE. A disordered region spans residues 143 to 163; it reads WGEVESHDSHSSTRQAFRKKL. The ATP site is built by D257, E322, and R394.

It belongs to the ClpX chaperone family. HslU subfamily. A double ring-shaped homohexamer of HslV is capped on each side by a ring-shaped HslU homohexamer. The assembly of the HslU/HslV complex is dependent on binding of ATP.

It localises to the cytoplasm. In terms of biological role, ATPase subunit of a proteasome-like degradation complex; this subunit has chaperone activity. The binding of ATP and its subsequent hydrolysis by HslU are essential for unfolding of protein substrates subsequently hydrolyzed by HslV. HslU recognizes the N-terminal part of its protein substrates and unfolds these before they are guided to HslV for hydrolysis. The polypeptide is ATP-dependent protease ATPase subunit HslU (Haemophilus influenzae (strain PittEE)).